The chain runs to 753 residues: MLRHTRNKCLSIIPRRYLFVPSNSFTDSKKKNVIRAKPRVKSTPKIMEDEAHQKKPQIDKSLIAKAKKDLRELRSLAKDVSEYIEPKDIDSLTTTKKISTELPPIDIDEATEDIFQEISDSKGKMKKHPKALPPSLSFPEKINQRLGLVSDLLVSRESTSNLPEKTRNDKWNILLTQLNAAGGFKELSEVDIRSFVNKIPLRSLRNLIPFIENMYHEAGVSVHYNTYYSFIRALSLGASISDTQIQVIEGYFNEIEKQTELKMDHYETKIAVYVKNKNKKKIEEVLGVMKAKNLPLSKSIYKSILSSYVYYTKDHRRAIEVFDSMKFLSESTKPDAKVYAQIIISCMMNDDIDKGLDLLQEMRDNNVKPNQSILSALAKGCARSRQHKFQAWNHLFQIYEYGWTPTLQTFEHMLYISAKDGDVELTRALFYKMLETNSVTPSAFISLMLAYANYQSPTSRTEPFLVSLTENGRLFKQNIMANVDFSKPIHGFPFLPTSRIPDGKFILAESSAIWAYTIMHNPSFVNNPHVAAPYLNIAYELGEFNDFKDRLNESTYLNDEGIPKVREIEIIEPNEETESPDSELQVVEPNENDTGLVKSPILNKLSGHLKDNRHKAPRDSMIYQIALDAAGKFKKFDFAQEIIKERGQFRKSNMFKKLSSKEQTKQDFQFAEKLVYCYVKMNLIEDAYSVVLSSVDRFPWGWKQLVPLNTAAINLGSSELAAAVRKIAQSNQVKHHGKIKSNDYKKYVMKRGY.

A mitochondrion-targeting transit peptide spans 1–76 (MLRHTRNKCL…KKDLRELRSL (76 aa)). PPR repeat units lie at residues 262-296 (KMDHYETKIAVYVKNKNKKKIEEVLGVMKAKNLPL), 297-332 (SKSIYKSILSSYVYYTKDHRRAIEVFDSMKFLSEST), 335-369 (DAKVYAQIIISCMMNDDIDKGLDLLQEMRDNNVKP), 370-405 (NQSILSALAKGCARSRQHKFQAWNHLFQIYEYGWTP), and 406-441 (TLQTFEHMLYISAKDGDVELTRALFYKMLETNSVTP).

The protein belongs to the CCM1 family. In terms of assembly, binds to mitochondrial small subunit 15S rRNA.

Its subcellular location is the mitochondrion. Its function is as follows. Regulates mitochondrial small subunit maturation by controlling 15S rRNA 5'-end processing. Localizes to the 5' precursor of the 15S rRNA in a position that is subsequently occupied by mS47 in the mature yeast mtSSU. Uses structure and sequence-specific RNA recognition, binding to a single-stranded region of the precursor and specifically recognizing bases -6 to -1. The exchange of Ccm1 for mS47 is coupled to the irreversible removal of precursor rRNA that is accompanied by conformational changes of the mitoribosomal proteins uS5m and mS26. These conformational changes signal completion of 5'-end rRNA processing through protection of the mature 5'-end of the 15S rRNA and stabilization of mS47. The removal of the 5' precursor together with the dissociation of Ccm1 may be catalyzed by the 5'-3' exoribonuclease Pet127. Involved in the specific removal of group I introns in mitochondrial encoded transcripts. This chain is Mitochondrial 15S rRNA processing factor CCM1 (CCM1), found in Candida tropicalis (strain ATCC MYA-3404 / T1) (Yeast).